We begin with the raw amino-acid sequence, 763 residues long: Phosphoglycerol transferase I (763 aa).

The next 4 membrane-spanning stretches (helical) occupy residues Met1 to Ala21, Trp26 to Tyr46, Ile77 to Ile97, and Val108 to Phe128.

This sequence belongs to the OpgB family.

The protein localises to the cell inner membrane. It catalyses the reaction a phosphatidylglycerol + a membrane-derived-oligosaccharide D-glucose = a 1,2-diacyl-sn-glycerol + a membrane-derived-oligosaccharide 6-(glycerophospho)-D-glucose.. It functions in the pathway glycan metabolism; osmoregulated periplasmic glucan (OPG) biosynthesis. Its function is as follows. Transfers a phosphoglycerol residue from phosphatidylglycerol to the membrane-bound nascent glucan backbones. The sequence is that of Phosphoglycerol transferase I from Salmonella newport (strain SL254).